The following is a 256-amino-acid chain: Leucyl/phenylalanyl-tRNA--protein transferase (256 aa).

The interval 1–21 (MIPWLPDDSDSAPFPPTRLAL) is disordered.

The protein belongs to the L/F-transferase family.

It localises to the cytoplasm. The enzyme catalyses N-terminal L-lysyl-[protein] + L-leucyl-tRNA(Leu) = N-terminal L-leucyl-L-lysyl-[protein] + tRNA(Leu) + H(+). It carries out the reaction N-terminal L-arginyl-[protein] + L-leucyl-tRNA(Leu) = N-terminal L-leucyl-L-arginyl-[protein] + tRNA(Leu) + H(+). It catalyses the reaction L-phenylalanyl-tRNA(Phe) + an N-terminal L-alpha-aminoacyl-[protein] = an N-terminal L-phenylalanyl-L-alpha-aminoacyl-[protein] + tRNA(Phe). Its function is as follows. Functions in the N-end rule pathway of protein degradation where it conjugates Leu, Phe and, less efficiently, Met from aminoacyl-tRNAs to the N-termini of proteins containing an N-terminal arginine or lysine. The protein is Leucyl/phenylalanyl-tRNA--protein transferase of Leptothrix cholodnii (strain ATCC 51168 / LMG 8142 / SP-6) (Leptothrix discophora (strain SP-6)).